The primary structure comprises 161 residues: Anaerobic nitrite reductase HB2 (161 aa).

Positions 5–154 constitute a Globin domain; it reads VFTEKQEALV…LALAIKAEMK (150 aa). The Homodimerization signature appears at 38–42; it reads EIAPA. Residues S48, K62, H66, and H101 each contribute to the heme b site. A Homodimerization motif is present at residues 108–120; it reads DPHFEVVKEALVR.

The protein belongs to the plant globin family. In terms of assembly, homodimer. Heme b serves as cofactor.

It is found in the cytoplasm. The protein localises to the nucleus. The catalysed reaction is Fe(III)-heme b-[protein] + nitric oxide + H2O = Fe(II)-heme b-[protein] + nitrite + 2 H(+). In terms of biological role, phytoglobin that reduces nitrite to nitric oxide (NO) under anoxic conditions (e.g. during flooding or in waterlogged soil). May not function as an oxygen storage or transport protein. Has an unusually high affinity for O(2) through an hexacoordinate heme iron because of a very low dissociation constant. This Brassica napus (Rape) protein is Anaerobic nitrite reductase HB2.